The primary structure comprises 123 residues: UPF0102 protein CLK_1817 (123 aa).

Belongs to the UPF0102 family.

This chain is UPF0102 protein CLK_1817, found in Clostridium botulinum (strain Loch Maree / Type A3).